A 98-amino-acid polypeptide reads, in one-letter code: Large ribosomal subunit protein mL53 (98 aa).

Belongs to the mitochondrion-specific ribosomal protein mL53 family. Component of the mitochondrial large ribosomal subunit (mt-LSU). Mature N.crassa 74S mitochondrial ribosomes consist of a small (37S) and a large (54S) subunit. The 37S small subunit contains a 16S ribosomal RNA (16S mt-rRNA) and 32 different proteins. The 54S large subunit contains a 23S rRNA (23S mt-rRNA) and 42 different proteins.

The protein resides in the mitochondrion. Component of the mitochondrial ribosome (mitoribosome), a dedicated translation machinery responsible for the synthesis of mitochondrial genome-encoded proteins, including at least some of the essential transmembrane subunits of the mitochondrial respiratory chain. The mitoribosomes are attached to the mitochondrial inner membrane and translation products are cotranslationally integrated into the membrane. The protein is Large ribosomal subunit protein mL53 (mrpl44) of Neurospora crassa (strain ATCC 24698 / 74-OR23-1A / CBS 708.71 / DSM 1257 / FGSC 987).